The primary structure comprises 371 residues: Maltose/maltodextrin import ATP-binding protein MalK (371 aa).

An ABC transporter domain is found at 4 to 234 (VQLQNVTKAW…PADRFVAGFI (231 aa)). 36-43 (GPSGCGKS) lines the ATP pocket.

It belongs to the ABC transporter superfamily. Maltooligosaccharide importer (TC 3.A.1.1.1) family. The complex is composed of two ATP-binding proteins (MalK), two transmembrane proteins (MalG and MalK) and a solute-binding protein (MalE).

It is found in the cell inner membrane. It catalyses the reaction D-maltose(out) + ATP + H2O = D-maltose(in) + ADP + phosphate + H(+). Its function is as follows. Part of the ABC transporter complex MalEFGK involved in maltose/maltodextrin import. Responsible for energy coupling to the transport system. This Escherichia coli O6:H1 (strain CFT073 / ATCC 700928 / UPEC) protein is Maltose/maltodextrin import ATP-binding protein MalK.